We begin with the raw amino-acid sequence, 173 residues long: Small ribosomal subunit protein uS5 (173 aa).

Residues 17–80 enclose the S5 DRBM domain; that stretch reads WQERVIQIRR…SDAKKHVVDV (64 aa).

This sequence belongs to the universal ribosomal protein uS5 family. As to quaternary structure, part of the 30S ribosomal subunit. Contacts proteins S4 and S8.

In terms of biological role, with S4 and S12 plays an important role in translational accuracy. Functionally, located at the back of the 30S subunit body where it stabilizes the conformation of the head with respect to the body. This chain is Small ribosomal subunit protein uS5, found in Picosynechococcus sp. (strain ATCC 27264 / PCC 7002 / PR-6) (Agmenellum quadruplicatum).